An 879-amino-acid polypeptide reads, in one-letter code: DNA replication licensing factor mcm3 (879 aa).

Residues 306–513 (VFELLSTSLA…KDRALSEHVL (208 aa)) form the MCM domain. 356–363 (GDPSTAKS) is a binding site for ATP. The Arginine finger signature appears at 488–491 (SRFD). The tract at residues 679-778 (RKKHKKQRLE…STLPATSREL (100 aa)) is disordered. Residues 690 to 713 (GEEFDSEDDNSDDMDIEESEEEMD) are compositionally biased toward acidic residues. The segment covering 732-752 (TSQSQESGSEIGSSIAGTAGS) has biased composition (low complexity). Polar residues predominate over residues 754–778 (NVGTSNTQLSWPSTHSTLPATSREL).

It belongs to the MCM family. As to quaternary structure, component of the mcm2-7 complex. The complex forms a toroidal hexameric ring with the proposed subunit order mcm2-mcm6-mcm4-mcm7-mcm3-mcm5. The heterodimers of mcm4/mcm6 and mcm3/mcm5 interact with mcm2 and mcm7.

It localises to the nucleus. It carries out the reaction ATP + H2O = ADP + phosphate + H(+). In terms of biological role, acts as a component of the mcm2-7 complex (mcm complex) which is the putative replicative helicase essential for 'once per cell cycle' DNA replication initiation and elongation in eukaryotic cells. The active ATPase sites in the mcm2-7 ring are formed through the interaction surfaces of two neighboring subunits such that a critical structure of a conserved arginine finger motif is provided in trans relative to the ATP-binding site of the Walker A box of the adjacent subunit. The six ATPase active sites, however, are likely to contribute differentially to the complex helicase activity. This chain is DNA replication licensing factor mcm3 (mcm3), found in Schizosaccharomyces pombe (strain 972 / ATCC 24843) (Fission yeast).